The sequence spans 555 residues: Chaperonin GroEL 2 (555 aa).

ATP-binding positions include 29 to 32 (TLGP), 86 to 90 (DGTTT), Gly-414, 480 to 482 (NAL), and Asp-496.

Belongs to the chaperonin (HSP60) family. In terms of assembly, forms a cylinder of 14 subunits composed of two heptameric rings stacked back-to-back. Interacts with the co-chaperonin GroES.

The protein localises to the cytoplasm. It carries out the reaction ATP + H2O + a folded polypeptide = ADP + phosphate + an unfolded polypeptide.. In terms of biological role, together with its co-chaperonin GroES, plays an essential role in assisting protein folding. The GroEL-GroES system forms a nano-cage that allows encapsulation of the non-native substrate proteins and provides a physical environment optimized to promote and accelerate protein folding. The protein is Chaperonin GroEL 2 of Synechococcus sp. (strain ATCC 27144 / PCC 6301 / SAUG 1402/1) (Anacystis nidulans).